Here is a 472-residue protein sequence, read N- to C-terminus: Divalent metal cation transporter MntH (472 aa).

11 helical membrane passes run 59 to 79 (LLAFLGPGYMVSVGYMDPGNW), 92 to 112 (MLLSVILLSNVMAIVLQALAA), 136 to 156 (LALWVVCELAIIACDLAEVIG), 167 to 187 (VPIIWGVVITAVDVVLVLLLM), 196 to 216 (AFVIALLLVIFGCFVVQIVLA), 233 to 253 (VVADPQALYLAIGIVGATVMP), 288 to 308 (LALMLALFINASILILAAAVF), 325 to 345 (LLAPVLGVGVAATLFATALLA), 377 to 397 (VLTRGLAIVPVIVVVALYGEQ), 402 to 422 (LLLLSQVILSMQLPFAVIPLL), and 439 to 459 (WLMVVAWLIAGVIVVLNVKLL).

This sequence belongs to the NRAMP family.

It is found in the cell inner membrane. Its function is as follows. H(+)-stimulated, divalent metal cation uptake system. The sequence is that of Divalent metal cation transporter MntH from Xylella fastidiosa (strain 9a5c).